A 205-amino-acid chain; its full sequence is Protein GrpE (205 aa).

Belongs to the GrpE family. Homodimer.

Its subcellular location is the cytoplasm. Participates actively in the response to hyperosmotic and heat shock by preventing the aggregation of stress-denatured proteins, in association with DnaK and GrpE. It is the nucleotide exchange factor for DnaK and may function as a thermosensor. Unfolded proteins bind initially to DnaJ; upon interaction with the DnaJ-bound protein, DnaK hydrolyzes its bound ATP, resulting in the formation of a stable complex. GrpE releases ADP from DnaK; ATP binding to DnaK triggers the release of the substrate protein, thus completing the reaction cycle. Several rounds of ATP-dependent interactions between DnaJ, DnaK and GrpE are required for fully efficient folding. The protein is Protein GrpE of Shewanella loihica (strain ATCC BAA-1088 / PV-4).